A 313-amino-acid chain; its full sequence is MKKLNIIFAGTPDISAQVLKDLYKSQHNIQAVLTQPDRAKGRGKKVQFSPVKEVALANHTPVFQPLSFKKNPEVLEQIKQLKPDVIVVIAYGIIVPQEFLDIARYGCLNIHVSLLPKWRGAAPIQRAIQAGDTKTGICIMQMDAGLDTGDILNTLEIEIQETDTSQTLHDKFAKLSIKPLLETLEKIEIIKPEPQQGEPSYAHKITKQEGLIDFTKSAWQISCHIRAFTPWPGAYFILDDEAIKVGEFEILYQNTDNRKAGTIIDIDRSGFDIATSDKIIRFRQLQFPNKKMLNIVDILNGKDLDKYIGYKLG.

113–116 lines the (6S)-5,6,7,8-tetrahydrofolate pocket; the sequence is SLLP.

This sequence belongs to the Fmt family.

It carries out the reaction L-methionyl-tRNA(fMet) + (6R)-10-formyltetrahydrofolate = N-formyl-L-methionyl-tRNA(fMet) + (6S)-5,6,7,8-tetrahydrofolate + H(+). Attaches a formyl group to the free amino group of methionyl-tRNA(fMet). The formyl group appears to play a dual role in the initiator identity of N-formylmethionyl-tRNA by promoting its recognition by IF2 and preventing the misappropriation of this tRNA by the elongation apparatus. The sequence is that of Methionyl-tRNA formyltransferase from Francisella tularensis subsp. novicida (strain U112).